A 330-amino-acid polypeptide reads, in one-letter code: Glycerol-3-phosphate dehydrogenase [NAD(P)+] 1 (330 aa).

Residues Trp-15, Arg-35, and Lys-105 each coordinate NADPH. Positions 105, 133, and 135 each coordinate sn-glycerol 3-phosphate. Position 137 (Ala-137) interacts with NADPH. Residues Lys-188, Asp-241, Ser-251, Arg-252, and Asn-253 each contribute to the sn-glycerol 3-phosphate site. Lys-188 serves as the catalytic Proton acceptor. Arg-252 is an NADPH binding site. Ile-276 and Glu-278 together coordinate NADPH.

Belongs to the NAD-dependent glycerol-3-phosphate dehydrogenase family.

It is found in the cytoplasm. It catalyses the reaction sn-glycerol 3-phosphate + NAD(+) = dihydroxyacetone phosphate + NADH + H(+). The catalysed reaction is sn-glycerol 3-phosphate + NADP(+) = dihydroxyacetone phosphate + NADPH + H(+). The protein operates within membrane lipid metabolism; glycerophospholipid metabolism. Catalyzes the reduction of the glycolytic intermediate dihydroxyacetone phosphate (DHAP) to sn-glycerol 3-phosphate (G3P), the key precursor for phospholipid synthesis. The protein is Glycerol-3-phosphate dehydrogenase [NAD(P)+] 1 of Sphingopyxis alaskensis (strain DSM 13593 / LMG 18877 / RB2256) (Sphingomonas alaskensis).